The sequence spans 168 residues: Cyclin-dependent kinase 4 inhibitor C (168 aa).

4 ANK repeats span residues 4-33 (PWGN…NVNA), 37-65 (FGRT…NPDL), 69-98 (TGFA…DVNI), and 102-132 (EGNL…NVGH).

The protein belongs to the CDKN2 cyclin-dependent kinase inhibitor family. Heterodimer of p18 with CDK6. In terms of tissue distribution, highest levels found in skeletal muscle. Also found in pancreas and heart.

Its function is as follows. Interacts strongly with CDK6, weakly with CDK4. Inhibits cell growth and proliferation with a correlated dependence on endogenous retinoblastoma protein RB. In Homo sapiens (Human), this protein is Cyclin-dependent kinase 4 inhibitor C (CDKN2C).